The chain runs to 321 residues: CRISPR-associated aCascade subunit Cas7/Csa2 2 (321 aa).

It belongs to the CRISPR-associated protein Cas7/Cst2/DevR family. Subtype I-a/Apern subfamily. Part of the aCascade ribonucleoprotein complex, minimally composed of Csa2 and Cas5a, which binds crRNA. Other possible components of aCascade in strain P1 are Cas6b (SSO1437) and Csa5 (SSO1443), while SSO1399, Cas5b (SSO1400) and SSO1401 have sometimes been seen weakly associated. Csa2 is probably the major RNA-binding subunit. The Csa2-Cas5a-crRNA complex also binds target DNA homologous to crRNA, probably forming an R-loop. Purified aCascade forms a filament about 6 nm in width.

CRISPR (clustered regularly interspaced short palindromic repeat) is an adaptive immune system that provides protection against mobile genetic elements (viruses, transposable elements and conjugative plasmids). CRISPR clusters contain spacers, sequences complementary to antecedent mobile elements, and target invading nucleic acids. CRISPR clusters are transcribed and processed into CRISPR RNA (crRNA). This chain is CRISPR-associated aCascade subunit Cas7/Csa2 2 (csa2b), found in Saccharolobus solfataricus (strain ATCC 35092 / DSM 1617 / JCM 11322 / P2) (Sulfolobus solfataricus).